A 142-amino-acid chain; its full sequence is MHEVRVLAFQKIYSIDINQSAMDDIFDIFNIEDKDLDIENESIKSFYSSLVIGTFDNLEHIDSLIRDISLNWSLERMDKVDLAILRMGVYSLKFQNFENSKRAIIDEAILIAKKYGSKNSYKFINGILDALLKNMESGIEKK.

This sequence belongs to the NusB family.

Involved in transcription antitermination. Required for transcription of ribosomal RNA (rRNA) genes. Binds specifically to the boxA antiterminator sequence of the ribosomal RNA (rrn) operons. The chain is Transcription antitermination protein NusB from Borreliella burgdorferi (strain ATCC 35210 / DSM 4680 / CIP 102532 / B31) (Borrelia burgdorferi).